The sequence spans 471 residues: PE-PGRS family protein PE_PGRS33 (471 aa).

Positions 1–30 (MSFVVTIPEALAAVATDLAGIGSTIGTANA) are essential for translocation to the cell surface. The 93-residue stretch at 1–93 (MSFVVTIPEA…AGSYAAAEAA (93 aa)) folds into the PE domain. The interval 140-230 (GNGGAGGSGA…GLFFGVGGAG (91 aa)) is interacts with TLR2.

This sequence belongs to the mycobacterial PE family. PGRS subfamily. Interacts with human TLR2.

The protein resides in the secreted. It localises to the cell wall. Its subcellular location is the cell surface. The protein localises to the cell outer membrane. Functionally, induces TNF-alpha release through human Toll-like receptor 2 (TLR2) signaling pathway, leading to macrophage apoptosis. The protein is PE-PGRS family protein PE_PGRS33 (PE_PGRS33) of Mycobacterium tuberculosis (strain CDC 1551 / Oshkosh).